An 857-amino-acid chain; its full sequence is MSDLSAHTPMMQQYWKLKNQHPDQLMFYRMGDFYEIFYEDAKKAAKLLDITLTARGQSAGQSIPMCGIPFHSLEGYLAKLVKLGESVVICEQIGDPATSKGPVERQVVRIITPGTVSDEALLDERRDNLIAALLGDERLFGLAVLDITSGNFSVQEIKGWENLLAELERLNPVELLIPDDWPRDLPAEKRPGARRRAPWDFDRDSARKALCQQFATKDLKGFGCDKLTLAIGAAGCLLTYAKETQRTALPHLRSLRHERLDDTVILDGASRRNLELDINLAGGRDNTLQSVIDRCQTAMASRLLSRWLNRPLRDLKVLQARQDSIRCLLDSYRFEKLQPQLKEIGDIERILARIGLRNARPRDLARLRDALGALPELQNAMTELEAPHLARLAAITGTYPELASLLERAIIDNPPAVIRDGGVLKAGYDNELDELLAISENAGQFLIDLEAREKARTGLANLKVGYNRVHGYFIELPTKQAEQAPGDYIRRQTLKGAERFITPELKAFEDKALSAKSRALAREKMLYDALLETLISHLAPLQDSAAALAELDVLSNLAERALNLDLNCPRFVDEPCLRIEQGRHPVVEQVLTTPFVANDLGLDNSTRMLIITGPNMGGKSTYMRQTALIVLLAHIGSFVPAASCELSLVDRIFTRIGSSDDLAGGRSTFMVEMSETANILHNATDRSLVLMDEVGRGTSTFDGLSLAWAAAERLAQLRAYTLFATHYFELTVLPESEPLVANVHLNATEHNERIVFLHHVLPGPASQSYGLAVAQLAGVPTAVIQRAREHLGRLETTSLPHEQPAAHKAKDAPQVPHQSDLFASLPHPAIEKLGKLQLDDMTPRQAIEMLYQLKNLL.

613 to 620 (GPNMGGKS) contributes to the ATP binding site. Residues 797–820 (TSLPHEQPAAHKAKDAPQVPHQSD) form a disordered region.

It belongs to the DNA mismatch repair MutS family.

In terms of biological role, this protein is involved in the repair of mismatches in DNA. It is possible that it carries out the mismatch recognition step. This protein has a weak ATPase activity. The polypeptide is DNA mismatch repair protein MutS (Pseudomonas putida (strain ATCC 47054 / DSM 6125 / CFBP 8728 / NCIMB 11950 / KT2440)).